Reading from the N-terminus, the 88-residue chain is Small ribosomal subunit protein bS20 (88 aa).

A compositionally biased stretch (basic and acidic residues) spans 1–23; it reads MPNTKSAEKALRVADANRQENRR. Residues 1–29 form a disordered region; it reads MPNTKSAEKALRVADANRQENRRAKSQVK.

The protein belongs to the bacterial ribosomal protein bS20 family.

In terms of biological role, binds directly to 16S ribosomal RNA. This chain is Small ribosomal subunit protein bS20, found in Dehalococcoides mccartyi (strain ATCC BAA-2100 / JCM 16839 / KCTC 5957 / BAV1).